A 270-amino-acid chain; its full sequence is Glutamate racemase (270 aa).

Residues 10-11 and 42-43 contribute to the substrate site; these read DS and YG. The active-site Proton donor/acceptor is Cys-74. 75–76 provides a ligand contact to substrate; that stretch reads NT. The Proton donor/acceptor role is filled by Cys-189. 190–191 is a substrate binding site; that stretch reads TH.

This sequence belongs to the aspartate/glutamate racemases family.

It catalyses the reaction L-glutamate = D-glutamate. It participates in cell wall biogenesis; peptidoglycan biosynthesis. Provides the (R)-glutamate required for cell wall biosynthesis. The sequence is that of Glutamate racemase from Bartonella henselae (strain ATCC 49882 / DSM 28221 / CCUG 30454 / Houston 1) (Rochalimaea henselae).